Reading from the N-terminus, the 800-residue chain is DNA topoisomerase 4 subunit A (800 aa).

One can recognise a Topo IIA-type catalytic domain in the interval 31–495 (LPDVRDGLKP…EIEEIKIDKE (465 aa)). The O-(5'-phospho-DNA)-tyrosine intermediate role is filled by Tyr-119.

Belongs to the type II topoisomerase GyrA/ParC subunit family. ParC type 2 subfamily. As to quaternary structure, heterotetramer composed of ParC and ParE.

Its subcellular location is the cell membrane. It catalyses the reaction ATP-dependent breakage, passage and rejoining of double-stranded DNA.. Topoisomerase IV is essential for chromosome segregation. It relaxes supercoiled DNA. Performs the decatenation events required during the replication of a circular DNA molecule. The polypeptide is DNA topoisomerase 4 subunit A (Staphylococcus aureus (strain MSSA476)).